The primary structure comprises 365 residues: Chorismate synthase (365 aa).

NADP(+)-binding residues include arginine 48 and arginine 54. FMN-binding positions include 125 to 127 (RSS), 237 to 238 (NA), glycine 277, 292 to 296 (KPTSS), and arginine 318.

This sequence belongs to the chorismate synthase family. In terms of assembly, homotetramer. FMNH2 serves as cofactor.

It carries out the reaction 5-O-(1-carboxyvinyl)-3-phosphoshikimate = chorismate + phosphate. Its pathway is metabolic intermediate biosynthesis; chorismate biosynthesis; chorismate from D-erythrose 4-phosphate and phosphoenolpyruvate: step 7/7. Functionally, catalyzes the anti-1,4-elimination of the C-3 phosphate and the C-6 proR hydrogen from 5-enolpyruvylshikimate-3-phosphate (EPSP) to yield chorismate, which is the branch point compound that serves as the starting substrate for the three terminal pathways of aromatic amino acid biosynthesis. This reaction introduces a second double bond into the aromatic ring system. This Verminephrobacter eiseniae (strain EF01-2) protein is Chorismate synthase.